The primary structure comprises 208 residues: Small ribosomal subunit protein uS4 (208 aa).

An S4 RNA-binding domain is found at 98–164 (SRLDNVVYRM…DRIKFALELA (67 aa)).

This sequence belongs to the universal ribosomal protein uS4 family. Part of the 30S ribosomal subunit. Contacts protein S5. The interaction surface between S4 and S5 is involved in control of translational fidelity.

In terms of biological role, one of the primary rRNA binding proteins, it binds directly to 16S rRNA where it nucleates assembly of the body of the 30S subunit. Its function is as follows. With S5 and S12 plays an important role in translational accuracy. The polypeptide is Small ribosomal subunit protein uS4 (Nitrosococcus oceani (strain ATCC 19707 / BCRC 17464 / JCM 30415 / NCIMB 11848 / C-107)).